A 173-amino-acid chain; its full sequence is Ribosome maturation factor RimM (173 aa).

The PRC barrel domain occupies 92 to 165 (EGEFYHADLI…RVVIEAPAEI (74 aa)).

The protein belongs to the RimM family. In terms of assembly, binds ribosomal protein uS19.

Its subcellular location is the cytoplasm. Its function is as follows. An accessory protein needed during the final step in the assembly of 30S ribosomal subunit, possibly for assembly of the head region. Essential for efficient processing of 16S rRNA. May be needed both before and after RbfA during the maturation of 16S rRNA. It has affinity for free ribosomal 30S subunits but not for 70S ribosomes. The polypeptide is Ribosome maturation factor RimM (Nitrobacter winogradskyi (strain ATCC 25391 / DSM 10237 / CIP 104748 / NCIMB 11846 / Nb-255)).